A 1400-amino-acid polypeptide reads, in one-letter code: DNA-directed RNA polymerase subunit beta' (1400 aa).

Positions 71, 73, 86, and 89 each coordinate Zn(2+). Mg(2+) contacts are provided by D462, D464, and D466. Positions 811, 885, 892, and 895 each coordinate Zn(2+).

This sequence belongs to the RNA polymerase beta' chain family. In terms of assembly, the RNAP catalytic core consists of 2 alpha, 1 beta, 1 beta' and 1 omega subunit. When a sigma factor is associated with the core the holoenzyme is formed, which can initiate transcription. It depends on Mg(2+) as a cofactor. The cofactor is Zn(2+).

The catalysed reaction is RNA(n) + a ribonucleoside 5'-triphosphate = RNA(n+1) + diphosphate. In terms of biological role, DNA-dependent RNA polymerase catalyzes the transcription of DNA into RNA using the four ribonucleoside triphosphates as substrates. This is DNA-directed RNA polymerase subunit beta' from Brucella suis (strain ATCC 23445 / NCTC 10510).